Reading from the N-terminus, the 84-residue chain is Small ribosomal subunit protein uS17 (84 aa).

It belongs to the universal ribosomal protein uS17 family. In terms of assembly, part of the 30S ribosomal subunit.

Its function is as follows. One of the primary rRNA binding proteins, it binds specifically to the 5'-end of 16S ribosomal RNA. This chain is Small ribosomal subunit protein uS17, found in Klebsiella pneumoniae subsp. pneumoniae (strain ATCC 700721 / MGH 78578).